The sequence spans 144 residues: Large ribosomal subunit protein uL16 (144 aa).

This sequence belongs to the universal ribosomal protein uL16 family. In terms of assembly, part of the 50S ribosomal subunit.

In terms of biological role, binds 23S rRNA and is also seen to make contacts with the A and possibly P site tRNAs. This Heliobacterium modesticaldum (strain ATCC 51547 / Ice1) protein is Large ribosomal subunit protein uL16.